We begin with the raw amino-acid sequence, 84 residues long: Neurotoxin BmK-M10 (84 aa).

Residues 1 to 19 (MNYLVMISFALLLMKGVES) form the signal peptide. Positions 21–83 (RDAYIAKPEN…VPIRVPGKCQ (63 aa)) constitute an LCN-type CS-alpha/beta domain. 4 disulfide bridges follow: Cys-31–Cys-82, Cys-35–Cys-55, Cys-41–Cys-65, and Cys-45–Cys-67. A propeptide (removed by a carboxypeptidase) is located at residue Arg-84.

In terms of tissue distribution, expressed by the venom gland.

It is found in the secreted. Its function is as follows. Binds to voltage-dependent sodium channels (Nav) and voltage-dependent delayed rectifier potassium channels and inhibits the inactivation of the activated channels, thereby blocking neuronal transmission. Administration to mice at a dosage of 0.8 mg/kg produces an analgesic effect. The sequence is that of Neurotoxin BmK-M10 from Olivierus martensii (Manchurian scorpion).